Consider the following 162-residue polypeptide: Cyclic pyranopterin monophosphate synthase (162 aa).

Substrate-binding positions include leucine 75 to histidine 77 and methionine 113 to glutamate 114. Residue aspartate 128 is part of the active site.

Belongs to the MoaC family. Homohexamer; trimer of dimers.

It catalyses the reaction (8S)-3',8-cyclo-7,8-dihydroguanosine 5'-triphosphate = cyclic pyranopterin phosphate + diphosphate. Its pathway is cofactor biosynthesis; molybdopterin biosynthesis. Functionally, catalyzes the conversion of (8S)-3',8-cyclo-7,8-dihydroguanosine 5'-triphosphate to cyclic pyranopterin monophosphate (cPMP). In Burkholderia vietnamiensis (strain G4 / LMG 22486) (Burkholderia cepacia (strain R1808)), this protein is Cyclic pyranopterin monophosphate synthase.